A 976-amino-acid chain; its full sequence is MLRKFILGLLLASQAVAQLPHKERDYDSRVYVALSLRDGLDPREFEASVSGLDHGQWTFEHPVGTIPNTYVFSAPKEYAPIENIRDQDRLEVAGGVLAKRELRKREKLQKKYGMSEEDVEKRLVALERLDYDWSERGLGSLEVLSERRIHKRAPVNWTEEEMEYLKEIKRRAEEAQKAQDDKGDKKEDQKDDKKEGQEAQKEGDKEDNKGDDKEDGEEDDDDDEDEDDDDASPAMPVQWKPVDESMYGGMPDDSLYDVYRKYYPDEVGIKDPSLWKQWYLHNVHKAGHDLNVTGLWLRNVTGWGVVTAVVDDGLDMNAEDIKANYFAEGSWDFNFNKSDPKPSSHDDYHGTRCAGEIAAVRNNVCGVGVAYDSKVAGIRILSKEIAEDIEALAINYEMDKNDIYSCSWGPPDNGQTMARPGKVVKDAMVNAITNGRQGKGNVFVFASGNGGSRGDNCNFDGYTNSIYSITVGALDFNDGHPYYSEACSANMVVTYSSGSEHYIVGTDINAIDDKSAAPRCQNQHGGTSAAAPLAAGVFALALSVRPDLTWRDMQYLALYSAVEINSNDDGWQDTASGQRFHHQFGYGKLDASKIVELAEGWNLVNNQTSFHSEVKTVSQKVKYNEPLKSVITVTRDDLDKVNFKRAEHITAVLNLEASYRGHVRVLLKGPRGVVSELAALRRDDRSKDGYDNWAFMSVAHWADEGEGDWELTVENTGEQDQVELVNWQLNVFGEQKDKREENKEGESKPEDENKEGEKEGEKKPEDENKEEGNKEDDKGDQKEDKPEDKPEDKPEDTPEDKPEDKPEDAPEDKPSDEKKPEEKPEEKPVDNSDSSSDSSDSHTSWWPDLSSKKSAWLYGAVLLVGGFIAVIGIYACVTRRNRVRRNRSKDAPSASSFEFDLIPHDDSDDDFVYPEDTHRRSGDNDRLYDPFAEVEDDDDMFRISDEGEDAHDVEPELNRVSMEADKRDNDRQNLLG.

The signal sequence occupies residues 1-17 (MLRKFILGLLLASQAVA). N-linked (GlcNAc...) asparagine glycosylation occurs at Asn-156. Positions 172-212 (AEEAQKAQDDKGDKKEDQKDDKKEGQEAQKEGDKEDNKGDD) are enriched in basic and acidic residues. Positions 172–246 (AEEAQKAQDD…VQWKPVDESM (75 aa)) are disordered. Residues 213–231 (KEDGEEDDDDDEDEDDDDA) are compositionally biased toward acidic residues. Residues 277 to 595 (QWYLHNVHKA…YGKLDASKIV (319 aa)) form the Peptidase S8 domain. N-linked (GlcNAc...) asparagine glycosylation is found at Asn-291 and Asn-299. The active-site Charge relay system is the Asp-311. Asn-336 is a glycosylation site (N-linked (GlcNAc...) asparagine). Active-site charge relay system residues include His-349 and Ser-528. The chain crosses the membrane as a helical span at residues 524 to 544 (HGGTSAAAPLAAGVFALALSV). A P/Homo B domain is found at 604–737 (VNNQTSFHSE…QLNVFGEQKD (134 aa)). Asn-606 carries an N-linked (GlcNAc...) asparagine glycan. A disordered region spans residues 733 to 848 (GEQKDKREEN…SDSHTSWWPD (116 aa)). Basic and acidic residues predominate over residues 734–830 (EQKDKREENK…EEKPEEKPVD (97 aa)). The helical transmembrane segment at 855–875 (AWLYGAVLLVGGFIAVIGIYA) threads the bilayer. Asn-886 carries an N-linked (GlcNAc...) asparagine glycan. The disordered stretch occupies residues 914–976 (PEDTHRRSGD…RDNDRQNLLG (63 aa)). Composition is skewed to basic and acidic residues over residues 915–928 (EDTH…DRLY) and 940–976 (MFRI…NLLG).

The protein belongs to the peptidase S8 family. Furin subfamily.

It localises to the membrane. This is Dibasic-processing endoprotease (XPR6) from Yarrowia lipolytica (strain CLIB 122 / E 150) (Yeast).